A 114-amino-acid chain; its full sequence is Lymphotactin (114 aa).

The first 21 residues, 1–21 (MRLLILALLGICSLTAYIVEG), serve as a signal peptide directing secretion. C32 and C69 form a disulfide bridge. Residues 91–114 (RNNMIQTKPTGTQQSTNTAVTLTG) form a disordered region.

The protein belongs to the intercrine gamma family. As to expression, highest level in spleen, lower in peripheral leukocytes and very low levels in lung, colon and small intestine.

It localises to the secreted. Its function is as follows. Chemotactic activity for lymphocytes but not for monocytes or neutrophils. In thymus, mediates medullary accumulation of thymic dendritic cells and contributes to regulatoy T cell development, playing a role in self-tolerance establishment. This Homo sapiens (Human) protein is Lymphotactin (XCL1).